The primary structure comprises 241 residues: DnaJ homolog subfamily B member 6 (241 aa).

An interaction with HSP70 region spans residues valine 2–glycine 146. Positions aspartate 3–glycine 69 constitute a J domain. The tract at residues phenylalanine 119 to lysine 241 is interaction with KRT18. Arginine 135 is subject to Omega-N-methylarginine.

Homooligomer. Interacts with BAG3, HSPB8 and STUB1. Interacts with ALKBH1. Interacts with HSP70, KRT18 and PTTG.

Its subcellular location is the cytoplasm. The protein localises to the perinuclear region. It localises to the nucleus. The protein resides in the myofibril. It is found in the sarcomere. Its subcellular location is the z line. Its function is as follows. Has a stimulatory effect on the ATPase activity of HSP70 in a dose-dependent and time-dependent manner and hence acts as a co-chaperone of HSP70. Plays an indispensable role in the organization of KRT8/KRT18 filaments. Acts as an endogenous molecular chaperone for neuronal proteins including huntingtin. Suppresses aggregation and toxicity of polyglutamine-containing, aggregation-prone proteins. Also reduces cellular toxicity and caspase-3 activity. In Macaca fascicularis (Crab-eating macaque), this protein is DnaJ homolog subfamily B member 6.